The chain runs to 343 residues: Probable dual-specificity RNA methyltransferase RlmN (343 aa).

Glu-90 acts as the Proton acceptor in catalysis. A Radical SAM core domain is found at 96–325 (HEGYATACIS…AEIRYEKGAD (230 aa)). An intrachain disulfide couples Cys-103 to Cys-330. Residues Cys-110, Cys-114, and Cys-117 each coordinate [4Fe-4S] cluster. S-adenosyl-L-methionine contacts are provided by residues 157–158 (GE), Ser-189, 212–214 (SLH), and Asn-288. The S-methylcysteine intermediate role is filled by Cys-330.

It belongs to the radical SAM superfamily. RlmN family. Requires [4Fe-4S] cluster as cofactor.

Its subcellular location is the cytoplasm. It catalyses the reaction adenosine(2503) in 23S rRNA + 2 reduced [2Fe-2S]-[ferredoxin] + 2 S-adenosyl-L-methionine = 2-methyladenosine(2503) in 23S rRNA + 5'-deoxyadenosine + L-methionine + 2 oxidized [2Fe-2S]-[ferredoxin] + S-adenosyl-L-homocysteine. It carries out the reaction adenosine(37) in tRNA + 2 reduced [2Fe-2S]-[ferredoxin] + 2 S-adenosyl-L-methionine = 2-methyladenosine(37) in tRNA + 5'-deoxyadenosine + L-methionine + 2 oxidized [2Fe-2S]-[ferredoxin] + S-adenosyl-L-homocysteine. Its function is as follows. Specifically methylates position 2 of adenine 2503 in 23S rRNA and position 2 of adenine 37 in tRNAs. This Pseudothermotoga lettingae (strain ATCC BAA-301 / DSM 14385 / NBRC 107922 / TMO) (Thermotoga lettingae) protein is Probable dual-specificity RNA methyltransferase RlmN.